The chain runs to 1077 residues: Receptor-like protein 1 (1077 aa).

The signal sequence occupies residues 1–38 (MRTDERRRWWVKPKKHITLVFITITMIIQFQMKGCVSC). The segment at 39-120 (VETERMGLLQ…SQTRSLNLSL (82 aa)) is N-cap. Topologically, residues 39–1024 (VETERMGLLQ…NEEEGNVIDM (986 aa)) are extracellular. Residues Asn117, Asn131, and Asn139 are each glycosylated (N-linked (GlcNAc...) asparagine). LRR repeat units lie at residues 124-147 (FPQL…FLGF), 153-176 (LDKL…FLNA), 177-201 (ATSI…ELSN), 202-225 (MTNL…GLTD), 227-250 (RDLE…SLST), 251-274 (AKLK…GLES), 275-299 (LQEL…VLKD), 300-324 (LKML…GLEI), 326-348 (TSLQ…YLGI), 351-376 (LMKL…NLTH), 378-397 (RTLD…FVSG), and 399-424 (PSVL…LVNQ). Asn201 carries N-linked (GlcNAc...) asparagine glycosylation. A glycan (N-linked (GlcNAc...) asparagine) is linked at Asn240. Residue Asn289 is glycosylated (N-linked (GlcNAc...) asparagine). Asn373, Asn390, and Asn423 each carry an N-linked (GlcNAc...) asparagine glycan. An LRR 13; degenerate repeat occupies 425–449 (TRLTVFKLSSKVGVIQVQTESSWAP). 19 LRR repeats span residues 450 to 473 (LFQL…FLVH), 474 to 498 (QRDL…LVKN), 499 to 522 (NTRL…ILVH), 524 to 545 (LQVL…IGMV), 546 to 570 (FPNL…IGEM), 572 to 594 (SLQV…FLSG), 595 to 621 (CYSL…NLTG), 623 to 643 (VGLF…LLKS), 644 to 666 (KNLT…WIGR), 667 to 694 (ISRL…PWVE), 696 to 713 (MDIS…NVNF), 714 to 737 (PSLR…LFKA), 739 to 761 (GLEV…IDQT), 762 to 785 (SKLR…ICQL), 786 to 808 (SEVG…CFSK), 877 to 901 (LRYM…IGDL), 902 to 925 (QNIR…ISKL), 927 to 949 (GLES…LADL), and 951 to 970 (SLGY…PFKG). Asn460 and Asn498 each carry an N-linked (GlcNAc...) asparagine glycan. The N-linked (GlcNAc...) asparagine glycan is linked to Asn553. Residues Asn618, Asn631, and Asn645 are each glycosylated (N-linked (GlcNAc...) asparagine). 2 N-linked (GlcNAc...) asparagine glycosylation sites follow: Asn749 and Asn771. Residue Asn908 is glycosylated (N-linked (GlcNAc...) asparagine). 2 N-linked (GlcNAc...) asparagine glycosylation sites follow: Asn956 and Asn961. The tract at residues 971 to 1024 (HLVTFDERSYIGNAHLCGLPTNKNCISQRVPEPPSVSTHAKEEENEEEGNVIDM) is C-cap/acidic domain. Residues 1025 to 1045 (VWFYWTCAAVYISTSLALFAF) form a helical membrane-spanning segment. Topologically, residues 1046-1077 (LYIDSRWSREWFYRVDLCVHHILQFKRSSVCN) are cytoplasmic.

Belongs to the RLP family.

Its subcellular location is the cell membrane. In terms of biological role, involved in plant defense. Confers resistance to the bacterial pathogen Xanthomonas through recognition of the microbe-associated molecular pattern (MAMP) eMax. Functionality seems to depend on the presence of the receptor kinase SOBIR1 as an adapter protein. The chain is Receptor-like protein 1 from Arabidopsis thaliana (Mouse-ear cress).